Consider the following 335-residue polypeptide: Ubiquinone biosynthesis protein COQ4, mitochondrial (335 aa).

The N-terminal 10 residues, 1–10 (MLRLSLLRST), are a transit peptide targeting the mitochondrion. Positions 210, 211, 214, and 226 each coordinate Zn(2+).

It belongs to the COQ4 family. As to quaternary structure, component of a multi-subunit COQ enzyme complex, composed of at least COQ3, COQ4, COQ5, COQ6, COQ7 and COQ9. Interacts with COQ3. Requires Zn(2+) as cofactor.

The protein localises to the mitochondrion inner membrane. It catalyses the reaction 4-hydroxy-3-methoxy-5-(all-trans-hexaprenyl)benzoate + H(+) = 2-methoxy-6-(all-trans-hexaprenyl)phenol + CO2. It participates in cofactor biosynthesis; ubiquinone biosynthesis. Lyase that catalyzes the C1-decarboxylation of 4-hydroxy-3-methoxy-5-(all-trans-hexaprenyl)benzoic acid into 2-methoxy-6-(all-trans-hexaprenyl)phenol during ubiquinone biosynthesis. This Saccharomyces cerevisiae (strain YJM789) (Baker's yeast) protein is Ubiquinone biosynthesis protein COQ4, mitochondrial.